Here is a 434-residue protein sequence, read N- to C-terminus: Pectate lyase (434 aa).

The signal sequence occupies residues 1 to 22 (MKAAQFFLYSLLFFASAALSSA). N-linked (GlcNAc...) asparagine glycosylation is found at Asn68 and Asn97. 3 residues coordinate Ca(2+): Asp232, Asp256, and Asp260. Residue Arg312 is part of the active site.

The protein belongs to the polysaccharide lyase 1 family. Ca(2+) is required as a cofactor.

The catalysed reaction is Eliminative cleavage of (1-&gt;4)-alpha-D-galacturonan to give oligosaccharides with 4-deoxy-alpha-D-galact-4-enuronosyl groups at their non-reducing ends.. It functions in the pathway glycan metabolism; pectin degradation; 2-dehydro-3-deoxy-D-gluconate from pectin: step 2/5. The chain is Pectate lyase from Lilium longiflorum (Trumpet lily).